The chain runs to 314 residues: Tudor-interacting repair regulator protein (314 aa).

Glycine 2 carries the N-myristoyl glycine lipid modification.

It belongs to the Nudix hydrolase family. TIRR subfamily. As to quaternary structure, interacts (via the cytoplasmic part) with syndecan-4 (SDC4), but not with other syndecan proteins. In terms of processing, myristoylated in vitro; additional evidence is however required to confirm myristoylation in vivo. Ubiquitously expressed. Expressed in embryonic brain, eyes, gizzard, heart, intestine, kidney, liver, tibia and skin.

The protein resides in the nucleus. The protein localises to the cytoplasm. It is found in the cytoskeleton. Its subcellular location is the cell membrane. It localises to the cell junction. The protein resides in the focal adhesion. Its function is as follows. Key regulator of TP53BP1 required to stabilize TP53BP1 and regulate its recruitment to chromatin. This chain is Tudor-interacting repair regulator protein (NUDT16L1), found in Gallus gallus (Chicken).